Here is a 65-residue protein sequence, read N- to C-terminus: Small ribosomal subunit protein eS27 (65 aa).

The Zn(2+) site is built by C21, C24, C40, and C43. Residues 21–43 form a C4-type zinc finger; it reads CRDCGNVQVVFARPSSTVTCNIC.

The protein belongs to the eukaryotic ribosomal protein eS27 family. As to quaternary structure, part of the 30S ribosomal subunit. Requires Zn(2+) as cofactor.

The protein is Small ribosomal subunit protein eS27 of Thermoplasma acidophilum (strain ATCC 25905 / DSM 1728 / JCM 9062 / NBRC 15155 / AMRC-C165).